The following is a 699-amino-acid chain: Ubiquitin-like modifier-activating enzyme ATG7 (699 aa).

The GXGXXG motif signature appears at 370–375; sequence GAGTLG. The Glycyl thioester intermediate role is filled by Cys-550. The tract at residues 653 to 691 is homodimerization; it reads ALASRDYVAELSGLAEVQRLAEKAAAEMQWSEDEEGMGE.

Belongs to the ATG7 family. As to quaternary structure, homodimer. Interacts with ATG8 through a thioester bond between Cys-550 and the C-terminal Gly of ATG8 and with ATG12 through a thioester bond between Cys-550 and the C-terminal Gly of ATG12. Also interacts with ATG3.

Its subcellular location is the cytoplasm. The protein localises to the preautophagosomal structure. In terms of biological role, E1-like activating enzyme involved in the 2 ubiquitin-like systems required for cytoplasm to vacuole transport (Cvt) and autophagy. Activates ATG12 for its conjugation with ATG5 and ATG8 for its conjugation with phosphatidylethanolamine. Both systems are needed for the ATG8 association to Cvt vesicles and autophagosomes membranes. Autophagy is essential for maintenance of amino acid levels and protein synthesis under nitrogen starvation. Required for selective autophagic degradation of the nucleus (nucleophagy) as well as for mitophagy which contributes to regulate mitochondrial quantity and quality by eliminating the mitochondria to a basal level to fulfill cellular energy requirements and preventing excess ROS production. Required for normal mycelial growth and conidiogenesis. The sequence is that of Ubiquitin-like modifier-activating enzyme ATG7 from Sordaria macrospora (strain ATCC MYA-333 / DSM 997 / K(L3346) / K-hell).